We begin with the raw amino-acid sequence, 455 residues long: MTKDFKISVSAALISALFSSPYAFADDYDGIPNLTAVQISPNADPALGLEYPVRPPVPGAGGLNASAKGIHSIAIGATAEAAKGAAVAVGAGSIATGVNSVAIGPLSKALGDSAVTYGAASTAQKDGVAIGARASTSDTGVAVGFNSKADAKNSVAIGHSSHVAANHGYSIAIGDRSKTDRENSVSIGHESLNRQLTHLAAGTKDTDAVNVAQLKKEIEKTQENTNKRSAELLANANAYADNKSSSVLGIANNYTDSKSAETLENARKEAFAQSKDVLNMAKAHSNSVARTTLETAEEHANSVARTTLETAEEHANKKSAEALASANVYADSKSSHTLKTANSYTDVTVSNSTKKAIRESNQYTDHKFRQLDNRLDKLDTRVDKGLASSAALNSLFQPYGVGKVNFTAGVGGYRSSQALAIGSGYRVNENVALKAGVAYAGSSDVMYNASFNIEW.

The N-terminal stretch at 1-25 (MTKDFKISVSAALISALFSSPYAFA) is a signal peptide. The surface exposed passenger domain stretch occupies residues 26–363 (DDYDGIPNLT…KKAIRESNQY (338 aa)). A coiled-coil region spans residues 209-243 (VNVAQLKKEIEKTQENTNKRSAELLANANAYADNK). An outer membrane translocation of the passenger domain region spans residues 364 to 402 (TDHKFRQLDNRLDKLDTRVDKGLASSAALNSLFQPYGVG). Transmembrane regions (beta stranded) follow at residues 402-412 (GKVNFTAGVGG), 416-427 (SQALAIGSGYRV), 434-440 (KAGVAYA), and 444-455 (DVMYNASFNIEW). Residues 403–455 (KVNFTAGVGGYRSSQALAIGSGYRVNENVALKAGVAYAGSSDVMYNASFNIEW) form a translocator domain region.

Belongs to the autotransporter-2 (AT-2) (TC 1.B.40) family. As to quaternary structure, homotrimer; in gels migrates as monomers, dimers and homotrimers. Does not form trimers with distantly related EibA from E.coli; coexpression was lethal and one of the genes is eliminated in vivo. If the full translocator domain (368-455) is exchanged with that of EibA ('299-392'), will form heterotrimers with EibA and vice-versa.

It is found in the cell surface. The protein localises to the cell outer membrane. Its function is as follows. Collagen-binding outer membrane protein forming a fibrillar matrix on the bacterial cell surface. Promotes initial attachment and invasion of eukaryotic cells. Also protects the bacteria by being responsible for agglutination, serum resistance, complement inactivation and phagocytosis resistance. This Yersinia enterocolitica protein is Adhesin YadA (yadA).